The chain runs to 884 residues: Lon protease homolog 2, peroxisomal (884 aa).

One can recognise a Lon N-terminal domain in the interval 12–255 (LAILPFRNKV…KATELVDRHL (244 aa)). The interval 67-101 (SLLSPGVGSDSGEGGSKAPGGSAGESTKQDTKNGK) is disordered. Gly residues predominate over residues 75–89 (SDSGEGGSKAPGGSA). 408 to 415 (GPPGVGKT) serves as a coordination point for ATP. One can recognise a Lon proteolytic domain in the interval 689–874 (VASPGVSVGL…EEVLDHAFEG (186 aa)). Catalysis depends on residues S780 and K823. Positions 882-884 (SKL) match the Microbody targeting signal motif.

This sequence belongs to the peptidase S16 family. As to expression, expressed in roots, leaves and panicles.

The protein localises to the peroxisome matrix. The enzyme catalyses Hydrolysis of proteins in presence of ATP.. Functionally, ATP-dependent serine protease that mediates the selective degradation of misfolded and unassembled polypeptides in the peroxisomal matrix. Necessary for type 2 peroxisome targeting signal (PTS2)-containing protein processing and facilitates peroxisome matrix protein import. The chain is Lon protease homolog 2, peroxisomal (LON1) from Oryza sativa subsp. indica (Rice).